We begin with the raw amino-acid sequence, 346 residues long: NADH-ubiquinone oxidoreductase chain 2 (346 aa).

11 helical membrane-spanning segments follow: residues 1–21, 26–46, 60–80, 96–116, 122–142, 151–171, 178–198, 199–219, 242–262, 274–294, and 320–340; these read MSPY…MLIS, WVFM…ILVW, FIVQ…SLSG, MMIM…YWVV, LNYI…LAVL, SSML…GGLG, LLAF…VAGS, LLGL…FSIL, VLLG…GFFG, LLLG…FYYL, and LSGL…LVGG.

It belongs to the complex I subunit 2 family.

The protein resides in the mitochondrion inner membrane. It carries out the reaction a ubiquinone + NADH + 5 H(+)(in) = a ubiquinol + NAD(+) + 4 H(+)(out). Its function is as follows. Core subunit of the mitochondrial membrane respiratory chain NADH dehydrogenase (Complex I) that is believed to belong to the minimal assembly required for catalysis. Complex I functions in the transfer of electrons from NADH to the respiratory chain. The immediate electron acceptor for the enzyme is believed to be ubiquinone. This chain is NADH-ubiquinone oxidoreductase chain 2 (ND2), found in Branchiostoma lanceolatum (Common lancelet).